Reading from the N-terminus, the 122-residue chain is Ribosome-binding factor A (122 aa).

The span at Pro-95 to Ser-111 shows a compositional bias: basic and acidic residues. Positions Pro-95–Glu-122 are disordered.

This sequence belongs to the RbfA family. In terms of assembly, monomer. Binds 30S ribosomal subunits, but not 50S ribosomal subunits or 70S ribosomes.

It localises to the cytoplasm. In terms of biological role, one of several proteins that assist in the late maturation steps of the functional core of the 30S ribosomal subunit. Associates with free 30S ribosomal subunits (but not with 30S subunits that are part of 70S ribosomes or polysomes). Required for efficient processing of 16S rRNA. May interact with the 5'-terminal helix region of 16S rRNA. In Rubrobacter xylanophilus (strain DSM 9941 / JCM 11954 / NBRC 16129 / PRD-1), this protein is Ribosome-binding factor A.